The sequence spans 340 residues: Delta(1)-pyrroline-2-carboxylate reductase 2 (340 aa).

Residue serine 50 is the Charge relay system of the active site. Histidine 51 (proton donor) is an active-site residue. Arginine 55 provides a ligand contact to substrate. 123 to 127 is a binding site for NADP(+); that stretch reads HFSAL. Threonine 163 is a binding site for substrate. Residue 181–183 coordinates NADP(+); it reads DFA. Residue 189 to 190 participates in substrate binding; that stretch reads RG. Catalysis depends on aspartate 191, which acts as the Charge relay system. Residues 232 to 233 and 307 to 313 each bind NADP(+); these read HK and RLPSQRR.

This sequence belongs to the LDH2/MDH2 oxidoreductase family. In terms of assembly, homodimer.

It carries out the reaction L-proline + NAD(+) = 1-pyrroline-2-carboxylate + NADH + H(+). It catalyses the reaction L-proline + NADP(+) = 1-pyrroline-2-carboxylate + NADPH + H(+). Catalyzes the reduction of Delta(1)-pyrroline-2-carboxylate (Pyr2C) to L-proline, using NADPH as the electron donor. May be involved in a degradation pathway that converts trans-3-hydroxy-L-proline (t3LHyp) to L-proline. The protein is Delta(1)-pyrroline-2-carboxylate reductase 2 of Burkholderia multivorans (strain ATCC 17616 / 249).